The following is a 126-amino-acid chain: Fatty acid-binding protein, liver (126 aa).

Alanine 2 carries the N-acetylalanine modification. Arginine 56, glutamine 57, lysine 77, histidine 99, and glutamine 101 together coordinate cholate.

Belongs to the calycin superfamily. Fatty-acid binding protein (FABP) family.

The protein resides in the cytoplasm. Binds free fatty acids and their coenzyme A derivatives, bilirubin, and some other small molecules in the cytoplasm. May be involved in intracellular lipid transport. Binds 2 molecules of cholate per subunit. The chain is Fatty acid-binding protein, liver (FABP1) from Gallus gallus (Chicken).